The primary structure comprises 276 residues: Putative pyruvate, phosphate dikinase regulatory protein (276 aa).

ADP is bound at residue 154–161 (GVSRTSKS).

It belongs to the pyruvate, phosphate/water dikinase regulatory protein family. PDRP subfamily.

The catalysed reaction is N(tele)-phospho-L-histidyl/L-threonyl-[pyruvate, phosphate dikinase] + ADP = N(tele)-phospho-L-histidyl/O-phospho-L-threonyl-[pyruvate, phosphate dikinase] + AMP + H(+). The enzyme catalyses N(tele)-phospho-L-histidyl/O-phospho-L-threonyl-[pyruvate, phosphate dikinase] + phosphate + H(+) = N(tele)-phospho-L-histidyl/L-threonyl-[pyruvate, phosphate dikinase] + diphosphate. Functionally, bifunctional serine/threonine kinase and phosphorylase involved in the regulation of the pyruvate, phosphate dikinase (PPDK) by catalyzing its phosphorylation/dephosphorylation. The sequence is that of Putative pyruvate, phosphate dikinase regulatory protein from Wolbachia pipientis wMel.